A 230-amino-acid polypeptide reads, in one-letter code: Large ribosomal subunit protein uL1 (230 aa).

The protein belongs to the universal ribosomal protein uL1 family. In terms of assembly, part of the 50S ribosomal subunit.

In terms of biological role, binds directly to 23S rRNA. The L1 stalk is quite mobile in the ribosome, and is involved in E site tRNA release. Protein L1 is also a translational repressor protein, it controls the translation of the L11 operon by binding to its mRNA. This is Large ribosomal subunit protein uL1 from Ruminiclostridium cellulolyticum (strain ATCC 35319 / DSM 5812 / JCM 6584 / H10) (Clostridium cellulolyticum).